A 409-amino-acid chain; its full sequence is 5-aminolevulinate synthase (409 aa).

3 residues coordinate succinyl-CoA: arginine 21, serine 137, and lysine 156. Pyridoxal 5'-phosphate is bound by residues serine 189, histidine 217, and threonine 245. Lysine 248 is a catalytic residue. Lysine 248 carries the post-translational modification N6-(pyridoxal phosphate)lysine. The pyridoxal 5'-phosphate site is built by serine 277 and threonine 278. Threonine 365 is a succinyl-CoA binding site.

The protein belongs to the class-II pyridoxal-phosphate-dependent aminotransferase family. In terms of assembly, homodimer. Pyridoxal 5'-phosphate serves as cofactor.

It catalyses the reaction succinyl-CoA + glycine + H(+) = 5-aminolevulinate + CO2 + CoA. The protein operates within porphyrin-containing compound metabolism; protoporphyrin-IX biosynthesis; 5-aminolevulinate from glycine: step 1/1. The protein is 5-aminolevulinate synthase (hemA) of Rhodobacter capsulatus (strain ATCC BAA-309 / NBRC 16581 / SB1003).